The following is a 474-amino-acid chain: ATP synthase subunit beta (474 aa).

Gly155–Thr162 provides a ligand contact to ATP.

It belongs to the ATPase alpha/beta chains family. As to quaternary structure, F-type ATPases have 2 components, CF(1) - the catalytic core - and CF(0) - the membrane proton channel. CF(1) has five subunits: alpha(3), beta(3), gamma(1), delta(1), epsilon(1). CF(0) has three main subunits: a(1), b(2) and c(9-12). The alpha and beta chains form an alternating ring which encloses part of the gamma chain. CF(1) is attached to CF(0) by a central stalk formed by the gamma and epsilon chains, while a peripheral stalk is formed by the delta and b chains.

It localises to the cell inner membrane. It carries out the reaction ATP + H2O + 4 H(+)(in) = ADP + phosphate + 5 H(+)(out). In terms of biological role, produces ATP from ADP in the presence of a proton gradient across the membrane. The catalytic sites are hosted primarily by the beta subunits. This is ATP synthase subunit beta from Sorangium cellulosum (strain So ce56) (Polyangium cellulosum (strain So ce56)).